The chain runs to 1039 residues: MKLFPRTLLKILVVSFILNFGVTSKSYADDTLDTIVNTLQNLTCETQGVGDLLRTEFSQTCIVAPFFTFAIMNLVSPVLYMNTFLKLRINDNELFGTQFPGGQCTRENRADPNDLKLTFGLCSNLKLAGVRAKAVVDSALAIAKAVLTGNDPWDDIKEAWKNNKADYYNIYTQKPEDSGTMWDLGVPIFWKVVQDNDRICVGTYGFTGVVPVGCKYIKEPFPKSMYNSFMDVNDTNFIDDPNNKAVDPLALVSCSAAGGGCYQKAYNASRTAVVMTSPLIECIRQMIARLLISEDVCSFDDVNAVVNSASRQTSALFQFQVGMYRIVTAFLTLYVMLFGAKILLAGQVPPKNEYINFILKIIFVTYFSIGLNITPGSTSPYDRMDGMIQWAFPFLLNGINGLASWVMNAAPSGLCKFNGPDISYDNSVAYIALWDALDCRVAHYLGLDMLSTLLVENTYKSHNFANFDFFSFSAPPYIYLLIPAIISGNMMLVSLALAYPLLVISVAAFMVNATVMCMVSIVILGILAPLFVPMFLFDYTRGYFDSWVKLMISFLLQPMVVVTFMITMFSVYDFGFYGKCQYQSKLIHNSIEGALQGQTFKRDVLVFFVDNDWTKYSKEDAESCQNSLGYMLNNPISTAFNFAKDSVEQIVGSKPNQTCDPKAADADTKCNPKPGDSSTSSFLSKFQFLSGVILGPGMFFVSPKLLFEKIKDILLALVTACFTLYLMYNFSSQLANFAADMTEGVALSSVAIKPQAVFKAAMAALAAAGNATKGLDQFATKGGGGGDLLSTKGGRAGDLVKGSGGGGGSEGGDSFTSGGLRETSSTAATPSSALSSVGKSVGGTATPSSASEEMLDTSFSNRKPIEAPVSQPTTVSTQIDTAIKTEPPKVSAAEVVRNTAEDKLEDLSSKLNVTKEIKEAVPESQKEEPKEPRVKHTTEVEPELNLDENLGVTRTIRGLDKDRKFTEQESHELKIGEAGYVKQEMRNAQIRDRRAAFEKETEELYRSVGGRAKDKATERNDGTIENRSKKIDSGSDENP.

Residues 1 to 28 (MKLFPRTLLKILVVSFILNFGVTSKSYA) form the signal peptide. 6 helical membrane passes run 326 to 346 (IVTAFLTLYVMLFGAKILLAG), 354 to 374 (YINFILKIIFVTYFSIGLNIT), 387 to 407 (MIQWAFPFLLNGINGLASWVM), 491 to 511 (MLVSLALAYPLLVISVAAFMV), 517 to 537 (CMVSIVILGILAPLFVPMFLF), and 551 to 571 (MISFLLQPMVVVTFMITMFSV). The interval 654-680 (KPNQTCDPKAADADTKCNPKPGDSSTS) is disordered. A helical transmembrane segment spans residues 710–730 (IKDILLALVTACFTLYLMYNF). Disordered regions lie at residues 799-875 (LVKG…PTTV), 917-949 (IKEAVPESQKEEPKEPRVKHTTEVEPELNLDEN), and 1004-1039 (LYRSVGGRAKDKATERNDGTIENRSKKIDSGSDENP). Residues 802–811 (GSGGGGGSEG) are compositionally biased toward gly residues. Residues 812 to 836 (GDSFTSGGLRETSSTAATPSSALSS) are compositionally biased toward low complexity. Positions 843 to 861 (GTATPSSASEEMLDTSFSN) are enriched in polar residues. Basic and acidic residues-rich tracts occupy residues 917 to 939 (IKEAVPESQKEEPKEPRVKHTTE) and 1004 to 1033 (LYRSVGGRAKDKATERNDGTIENRSKKIDS).

This sequence belongs to the TrbL/VirB6 family.

It is found in the cell membrane. This is an uncharacterized protein from Rickettsia bellii (strain RML369-C).